We begin with the raw amino-acid sequence, 146 residues long: Large ribosomal subunit protein uL15 (146 aa).

A compositionally biased stretch (basic and acidic residues) spans 1–13 (MKLHELKPAEGSR). The tract at residues 1-57 (MKLHELKPAEGSRKVRNRVGRGTSSGNGKTSGRGQKGQKARSGVGLRPGFEGGQTPL) is disordered. Over residues 23–35 (TSSGNGKTSGRGQ) the composition is skewed to gly residues.

It belongs to the universal ribosomal protein uL15 family. Part of the 50S ribosomal subunit.

Binds to the 23S rRNA. This Streptococcus thermophilus (strain ATCC BAA-491 / LMD-9) protein is Large ribosomal subunit protein uL15.